Consider the following 120-residue polypeptide: Large ribosomal subunit protein uL18 (120 aa).

Residues 1 to 26 (MSKAKVTNARRKRSVRLKLRRSGGGR) form a disordered region. Over residues 8–23 (NARRKRSVRLKLRRSG) the composition is skewed to basic residues.

Belongs to the universal ribosomal protein uL18 family. Part of the 50S ribosomal subunit; part of the 5S rRNA/L5/L18/L25 subcomplex. Contacts the 5S and 23S rRNAs.

In terms of biological role, this is one of the proteins that bind and probably mediate the attachment of the 5S RNA into the large ribosomal subunit, where it forms part of the central protuberance. The protein is Large ribosomal subunit protein uL18 of Bradyrhizobium diazoefficiens (strain JCM 10833 / BCRC 13528 / IAM 13628 / NBRC 14792 / USDA 110).